Reading from the N-terminus, the 94-residue chain is Co-chaperonin GroES (94 aa).

This sequence belongs to the GroES chaperonin family. As to quaternary structure, heptamer of 7 subunits arranged in a ring. Interacts with the chaperonin GroEL.

It localises to the cytoplasm. Functionally, together with the chaperonin GroEL, plays an essential role in assisting protein folding. The GroEL-GroES system forms a nano-cage that allows encapsulation of the non-native substrate proteins and provides a physical environment optimized to promote and accelerate protein folding. GroES binds to the apical surface of the GroEL ring, thereby capping the opening of the GroEL channel. This Brevibacillus brevis (strain 47 / JCM 6285 / NBRC 100599) protein is Co-chaperonin GroES.